A 757-amino-acid chain; its full sequence is Protein ALTERED SEED GERMINATION 2 (757 aa).

WD repeat units lie at residues 6 to 43 (FHDG…LSQE), 48 to 87 (GHQG…LLHS), 91 to 132 (GHTA…GRAE), 145 to 185 (CHTR…SCPP), 213 to 253 (KQTL…PLAS), and 277 to 316 (RTNL…CSTG). The Nuclear localization signal signature appears at 245–257 (RRMLPPLASSRKR). The TPR repeat unit spans residues 442–475 (FKAHYYMSEALQQLGKCKEALDFATAAQHMNPSD). A disordered region spans residues 519–601 (ANSDSSHDMS…SSSQNDRTSY (83 aa)). Over residues 523–532 (SSHDMSRSER) the composition is skewed to basic and acidic residues. Residues 533–543 (EDSDYDEELEL) are compositionally biased toward acidic residues. Polar residues predominate over residues 582–601 (TVDNASSGTASSSQNDRTSY). WD repeat units follow at residues 618–658 (NVGT…LMKV) and 661–700 (GDES…PSIV). Cysteine 754 carries S-12-hydroxyfarnesyl cysteine; by FTB/ERA1 lipidation.

In terms of assembly, interacts with DDB1; the subcellular localization of this complex depends on farnesylation status. Binds to HDA9 in the cytosol when farnesylated. Farnesylated at Cys-754 by FTB/ERA1; this modification triggers an exclusion from the nucleus.

It is found in the nucleus. It localises to the cytoplasm. The protein resides in the cytosol. It participates in protein modification; protein ubiquitination. Its function is as follows. May function as a substrate adapter for CUL4-DDB1 E3 ubiquitin-protein ligase complex. Negative regulator of fatty acid biosynthetic process and accumulation. Acts as an abscisic acid (ABA) negative regulator. Involved in responses to salt (NaCl) and osmotic (e.g. in response to mannitol and PEG) stresses. This chain is Protein ALTERED SEED GERMINATION 2, found in Arabidopsis thaliana (Mouse-ear cress).